Reading from the N-terminus, the 324-residue chain is Archaeosine synthase subunit beta (324 aa).

Positions 12-254 (GKPGTALFII…LIWAKRKFPN (243 aa)) constitute a Radical SAM core domain. [4Fe-4S] cluster-binding residues include Cys-27, Cys-36, and Cys-39.

This sequence belongs to the radical SAM superfamily. RaSEA family. In terms of assembly, forms a robust complex with the archaeosine synthase alpha subunit ArcS, likely an alpha(2)beta(2) heterotetrameric structure. [4Fe-4S] cluster is required as a cofactor.

It catalyses the reaction 7-N-[(5S)-5-amino-5-carboxypentyl]formamidino-7-deazaguanosine(15) in tRNA + S-adenosyl-L-methionine = archaeosine(15) in tRNA + L-1-piperideine-6-carboxylate + 5'-deoxyadenosine + L-methionine + 2 H(+). The protein operates within tRNA modification; archaeosine-tRNA biosynthesis. In terms of biological role, radical SAM enzyme involved in the synthesis of archaeosine, a modified nucleoside present in the dihydrouridine loop (D-loop) of archaeal tRNAs. Catalyzes the cleavage of the C(epsilon)-N bond of the lysine moiety of q0kN15-tRNA, leading to the formation of archaeosine at position 15 in tRNAs. The polypeptide is Archaeosine synthase subunit beta (Thermococcus kodakarensis (strain ATCC BAA-918 / JCM 12380 / KOD1) (Pyrococcus kodakaraensis (strain KOD1))).